The sequence spans 358 residues: cAMP-dependent protein kinase catalytic subunit PRKX (358 aa).

Met1 is modified (N-acetylmethionine). The segment at 1 to 34 (MEAPGLAQAAAAESDSRKVAEETPDGAPALCPSP) is disordered. Positions 49–303 (FDTLATVGTG…ANDVKHHRWF (255 aa)) constitute a Protein kinase domain. ATP is bound by residues 55–63 (VGTGTFGRV) and Lys78. The active-site Proton acceptor is the Asp172. Position 203 is a phosphothreonine (Thr203). The region spanning 304 to 358 (RSVDWEAVPQRKLKPPIVPKIAGDGDTSNFETYPENDWDTAAPVPQKDLEIFKNF) is the AGC-kinase C-terminal domain.

It belongs to the protein kinase superfamily. AGC Ser/Thr protein kinase family. cAMP subfamily. Like other cAMP-dependent protein kinases, the inactive holoenzyme is probably composed of 2 PRKX catalytic subunits and a dimer of regulatory subunits. Interacts (cAMP-dependent) specifically with the regulatory subunits PRKAR1A and PRKAR1B. Compared to other cAMP-dependent serine/threonine protein kinases, does not interact with the 2 other PKA regulatory subunits PRKAR2A and PRKAR2B. Interacts with cAMP-dependent protein kinase inhibitor/PKI proteins; inhibits PRKX. Interacts with GPKOW. Interacts with SMAD6. Interacts with PKD1; involved in differentiation and controlled morphogenesis of the kidney. Interacts with PIN1 (via WW domain). Phosphorylated; autophosphorylates in vitro. As to expression, widely expressed (at protein level). Specifically expressed in blood by macrophages and granulocytes according to PubMed:9860982.

The protein localises to the cytoplasm. It localises to the nucleus. The enzyme catalyses L-seryl-[protein] + ATP = O-phospho-L-seryl-[protein] + ADP + H(+). The catalysed reaction is L-threonyl-[protein] + ATP = O-phospho-L-threonyl-[protein] + ADP + H(+). Binding of cAMP to the PRKAR1A or PRKAR1B regulatory subunits induces dissociation of the holoenzyme heterotetramer. The released monomeric PRKX is then active and able to phosphorylate its substrates. In terms of biological role, serine/threonine protein kinase regulated by and mediating cAMP signaling in cells. Acts through phosphorylation of downstream targets that may include CREB, SMAD6 and PKD1 and has multiple functions in cellular differentiation and epithelial morphogenesis. Regulates myeloid cell differentiation through SMAD6 phosphorylation. Involved in nephrogenesis by stimulating renal epithelial cell migration and tubulogenesis. Also involved in angiogenesis through stimulation of endothelial cell proliferation, migration and vascular-like structure formation. This chain is cAMP-dependent protein kinase catalytic subunit PRKX (PRKX), found in Homo sapiens (Human).